A 368-amino-acid chain; its full sequence is High affinity transport system protein p37 (368 aa).

A signal peptide spans 1–25; sequence MLFKKFTWVIPSLFLTIISTSLLIS. Residue C26 is the site of N-palmitoyl cysteine attachment. The S-diacylglycerol cysteine moiety is linked to residue C26.

The protein localises to the cell membrane. Functionally, P37 is part of a high-affinity transport system. In Mycoplasma genitalium (strain ATCC 33530 / DSM 19775 / NCTC 10195 / G37) (Mycoplasmoides genitalium), this protein is High affinity transport system protein p37 (p37).